The chain runs to 184 residues: Chromobox protein homolog hpl-1 (184 aa).

Over residues methionine 1 to asparagine 13 the composition is skewed to polar residues. Disordered stretches follow at residues methionine 1 to proline 27 and alanine 87 to aspartate 115. Residues phenylalanine 37–arginine 95 form the Chromo domain. The span at proline 99–aspartate 115 shows a compositional bias: polar residues.

As to quaternary structure, interacts with histone demethylase spr-5. Interacts with chromobox protein homolog hpl-2. Interacts with histone H3 tails methylated at 'Lys-9' (H3K9me3) and 'Lys-23'(H3K23me2). Interacts with histone H1 variant his-24 (when monomethylated at 'Lys-14'); the interaction is direct. May interact with the REST corepressor rcor-1, histone deacetylase hda-1, and the histone demethylase lsd-1.

The protein localises to the nucleus. Its function is as follows. Seems to be involved in transcriptional silencing in heterochromatin-like complexes. Involved in epigenetic repression. Probably does not act as global transcriptional repressor. Plays a role in linking epigenetic regulation with the innate immune response. Acting in concert with chromobox protein homolog hpl-2 and histone H1 protein his-24, involved in reproduction, somatic gonad development, male tail development and vulval cell fate decisions; perhaps as a result of modulating expression of Hox genes mab-5 and egl-5. Role in growth and somatic gonad development is antagonized by histone-lysine N-methyltransferase set-2/SET1. Required for larval development, acting redundantly with hpl-2. Plays a role in the formation of the vulva and in fertility, acting together with a CoREST-like complex, and hpl-2. In Caenorhabditis elegans, this protein is Chromobox protein homolog hpl-1.